The sequence spans 128 residues: NADH-quinone oxidoreductase subunit A (128 aa).

Transmembrane regions (helical) follow at residues 9–29 (FPIA…LALA), 68–88 (LLFI…VLLL), and 96–116 (LGWA…AGLV).

Belongs to the complex I subunit 3 family. NDH-1 is composed of 14 different subunits. Subunits NuoA, H, J, K, L, M, N constitute the membrane sector of the complex.

It is found in the cell inner membrane. It catalyses the reaction a quinone + NADH + 5 H(+)(in) = a quinol + NAD(+) + 4 H(+)(out). Functionally, NDH-1 shuttles electrons from NADH, via FMN and iron-sulfur (Fe-S) centers, to quinones in the respiratory chain. The immediate electron acceptor for the enzyme in this species is believed to be ubiquinone. Couples the redox reaction to proton translocation (for every two electrons transferred, four hydrogen ions are translocated across the cytoplasmic membrane), and thus conserves the redox energy in a proton gradient. This Anaeromyxobacter sp. (strain Fw109-5) protein is NADH-quinone oxidoreductase subunit A.